A 67-amino-acid chain; its full sequence is Beta-defensin 103A (67 aa).

A signal peptide spans 1–22 (MRIHFLLFALLFLFLMPVPGNG). Intrachain disulfides connect C33/C62, C40/C55, and C45/C63.

The protein belongs to the beta-defensin family.

The protein localises to the secreted. Its function is as follows. Exhibits antimicrobial activity against Gram-positive and Gram-negative bacteria. This chain is Beta-defensin 103A (DEFB103A), found in Equus caballus (Horse).